A 304-amino-acid chain; its full sequence is Acetylglutamate kinase (304 aa).

Substrate-binding positions include 77-78, Arg-99, and Asn-193; that span reads GG.

Belongs to the acetylglutamate kinase family. ArgB subfamily.

Its subcellular location is the cytoplasm. The enzyme catalyses N-acetyl-L-glutamate + ATP = N-acetyl-L-glutamyl 5-phosphate + ADP. The protein operates within amino-acid biosynthesis; L-arginine biosynthesis; N(2)-acetyl-L-ornithine from L-glutamate: step 2/4. Catalyzes the ATP-dependent phosphorylation of N-acetyl-L-glutamate. The protein is Acetylglutamate kinase of Pelodictyon phaeoclathratiforme (strain DSM 5477 / BU-1).